A 354-amino-acid chain; its full sequence is 2-methylisoborneol synthase (354 aa).

The tract at residues 1–29 (MIELIGHETPVPSQQQHTGGVRGTSACTP) is disordered. Residues D113, D114, E118, N264, S268, and E272 each contribute to the Mg(2+) site.

Belongs to the terpene synthase family. 2-methylisoborneol synthase subfamily. Requires Mg(2+) as cofactor.

It carries out the reaction (E)-2-methylgeranyl diphosphate + H2O = 2-methylisoborneol + diphosphate. Catalyzes the cyclization of 2-methylgeranyl diphosphate (2-MeGPP) to 2-methylisoborneol (2-MIB), which likely involves the intermediacy of 2-methyllinalyl diphosphate. This chain is 2-methylisoborneol synthase, found in Saccharopolyspora erythraea (strain ATCC 11635 / DSM 40517 / JCM 4748 / NBRC 13426 / NCIMB 8594 / NRRL 2338).